The chain runs to 329 residues: D-alanine--D-alanine ligase (329 aa).

Positions 120–326 constitute an ATP-grasp domain; that stretch reads KLWYDAIGIP…FHEFLADCIN (207 aa). 150 to 205 is a binding site for ATP; the sequence is AFDKWGKVFVKAARQGSSVGCYSVTNKQSVSQAVNDAFGYSEQVLVEKSVKPRELE. Positions 280, 293, and 295 each coordinate Mg(2+).

This sequence belongs to the D-alanine--D-alanine ligase family. Mg(2+) is required as a cofactor. The cofactor is Mn(2+).

It localises to the cytoplasm. The catalysed reaction is 2 D-alanine + ATP = D-alanyl-D-alanine + ADP + phosphate + H(+). It functions in the pathway cell wall biogenesis; peptidoglycan biosynthesis. In terms of biological role, cell wall formation. The chain is D-alanine--D-alanine ligase from Vibrio campbellii (strain ATCC BAA-1116).